Reading from the N-terminus, the 246-residue chain is Peroxisomal membrane protein 11A (246 aa).

Residues 1–93 (MDAFIRVANQ…LCLTLANLNR (93 aa)) are Cytoplasmic-facing. A helical membrane pass occupies residues 94–114 (VVYYICDTVLWAKSVGLTSGV). Topologically, residues 115–217 (NREKWQRWAA…LNQLGIYKSN (103 aa)) are lumenal. The chain crosses the membrane as a helical span at residues 218–238 (LGVVGLGGLISSLAGLLTVVY). Residues 218-238 (LGVVGLGGLISSLAGLLTVVY) form a required for homodimerization, interaction with PEX11G, and peroxisomal localization region. The Cytoplasmic portion of the chain corresponds to 239 to 246 (PQLKLKAR).

The protein belongs to the peroxin-11 family. As to quaternary structure, homodimer. Heterodimer with PEX11G. Probably interacts with COPB2 and COPA. Interacts with PEX19. Interacts with FIS1. As to expression, strongly expressed in liver and at lower levels in heart, brain, kidney and testis.

It is found in the peroxisome membrane. In terms of biological role, may be involved in peroxisomal proliferation and may regulate peroxisomes division. May mediate binding of coatomer proteins to the peroxisomal membrane. Promotes membrane protrusion and elongation on the peroxisomal surface. In Mus musculus (Mouse), this protein is Peroxisomal membrane protein 11A (Pex11a).